A 413-amino-acid polypeptide reads, in one-letter code: Arginine biosynthesis bifunctional protein ArgJ (413 aa).

Substrate is bound by residues Thr160, Lys186, Thr197, Glu284, Asn408, and Ser413. The active-site Nucleophile is the Thr197.

Belongs to the ArgJ family. In terms of assembly, heterotetramer of two alpha and two beta chains.

Its subcellular location is the cytoplasm. It catalyses the reaction N(2)-acetyl-L-ornithine + L-glutamate = N-acetyl-L-glutamate + L-ornithine. The catalysed reaction is L-glutamate + acetyl-CoA = N-acetyl-L-glutamate + CoA + H(+). Its pathway is amino-acid biosynthesis; L-arginine biosynthesis; L-ornithine and N-acetyl-L-glutamate from L-glutamate and N(2)-acetyl-L-ornithine (cyclic): step 1/1. It participates in amino-acid biosynthesis; L-arginine biosynthesis; N(2)-acetyl-L-ornithine from L-glutamate: step 1/4. Its function is as follows. Catalyzes two activities which are involved in the cyclic version of arginine biosynthesis: the synthesis of N-acetylglutamate from glutamate and acetyl-CoA as the acetyl donor, and of ornithine by transacetylation between N(2)-acetylornithine and glutamate. The polypeptide is Arginine biosynthesis bifunctional protein ArgJ (Burkholderia pseudomallei (strain 1710b)).